Here is a 499-residue protein sequence, read N- to C-terminus: Putative DBH-like monooxygenase protein 2 (499 aa).

Positions 1–16 are cleaved as a signal peptide; that stretch reads MAHDLLFRLFPLLALG. In terms of domain architecture, DOMON spans 40 to 156; sequence NVIFLRWDFD…NTVRVLAAYG (117 aa). Y209 is an active-site residue. 2 cysteine pairs are disulfide-bonded: C211/C261 and C248/C271. A glycan (N-linked (GlcNAc...) asparagine) is linked at N236. Cu cation is bound by residues H241 and H242. An N-linked (GlcNAc...) asparagine glycan is attached at N250. 3 residues coordinate Cu cation: H308, H389, and H391. 2 cysteine pairs are disulfide-bonded: C365–C480 and C443–C465. The active site involves H389. N404 carries N-linked (GlcNAc...) asparagine glycosylation. M464 is a Cu cation binding site. A glycan (N-linked (GlcNAc...) asparagine) is linked at N476.

It belongs to the copper type II ascorbate-dependent monooxygenase family. Cu(2+) is required as a cofactor.

The sequence is that of Putative DBH-like monooxygenase protein 2 (MOXD2P) from Homo sapiens (Human).